The following is a 273-amino-acid chain: Proteasome subunit beta (273 aa).

Over residues 1–19 (MQESTANKVAANATSSFTE) the composition is skewed to polar residues. Residues 1 to 23 (MQESTANKVAANATSSFTEHLQR) form a disordered region. Residues 1–50 (MQESTANKVAANATSSFTEHLQRDRPELLPFNRSGQGSATAAAPLQVPHA) constitute a propeptide, removed in mature form; by autocatalysis. The Nucleophile role is filled by threonine 51.

It belongs to the peptidase T1B family. As to quaternary structure, the 20S proteasome core is composed of 14 alpha and 14 beta subunits that assemble into four stacked heptameric rings, resulting in a barrel-shaped structure. The two inner rings, each composed of seven catalytic beta subunits, are sandwiched by two outer rings, each composed of seven alpha subunits. The catalytic chamber with the active sites is on the inside of the barrel. Has a gated structure, the ends of the cylinder being occluded by the N-termini of the alpha-subunits. Is capped by the proteasome-associated ATPase, ARC.

Its subcellular location is the cytoplasm. It carries out the reaction Cleavage of peptide bonds with very broad specificity.. It participates in protein degradation; proteasomal Pup-dependent pathway. With respect to regulation, the formation of the proteasomal ATPase ARC-20S proteasome complex, likely via the docking of the C-termini of ARC into the intersubunit pockets in the alpha-rings, may trigger opening of the gate for substrate entry. Interconversion between the open-gate and close-gate conformations leads to a dynamic regulation of the 20S proteasome proteolysis activity. In terms of biological role, component of the proteasome core, a large protease complex with broad specificity involved in protein degradation. The protein is Proteasome subunit beta of Pseudarthrobacter chlorophenolicus (strain ATCC 700700 / DSM 12829 / CIP 107037 / JCM 12360 / KCTC 9906 / NCIMB 13794 / A6) (Arthrobacter chlorophenolicus).